The following is a 704-amino-acid chain: Elongation factor G (704 aa).

A tr-type G domain is found at 8-290 (EKYRNIGICA…GVVRYLPAPN (283 aa)). Residues 17-24 (AHVDAGKT), 88-92 (DTPGH), and 142-145 (NKMD) contribute to the GTP site.

It belongs to the TRAFAC class translation factor GTPase superfamily. Classic translation factor GTPase family. EF-G/EF-2 subfamily.

Its subcellular location is the cytoplasm. Its function is as follows. Catalyzes the GTP-dependent ribosomal translocation step during translation elongation. During this step, the ribosome changes from the pre-translocational (PRE) to the post-translocational (POST) state as the newly formed A-site-bound peptidyl-tRNA and P-site-bound deacylated tRNA move to the P and E sites, respectively. Catalyzes the coordinated movement of the two tRNA molecules, the mRNA and conformational changes in the ribosome. In Francisella tularensis subsp. tularensis (strain FSC 198), this protein is Elongation factor G.